Here is an 87-residue protein sequence, read N- to C-terminus: MKPGIHPDYREVVFQDMSNGFKFITRSTIQTRETIDHEGKTYPLAKIEVSSESHSFYTGQQKIMDTAGRVEKFKNKFGARASGKVAK.

The protein belongs to the bacterial ribosomal protein bL31 family. Type B subfamily. Part of the 50S ribosomal subunit.

This is Large ribosomal subunit protein bL31B from Burkholderia vietnamiensis (strain G4 / LMG 22486) (Burkholderia cepacia (strain R1808)).